The following is a 341-amino-acid chain: Holliday junction branch migration complex subunit RuvB (341 aa).

A large ATPase domain (RuvB-L) region spans residues 1–182 (MTSSDPTLRP…FGIPTRLQFY (182 aa)). ATP is bound by residues Leu-21, Arg-22, Gly-63, Lys-66, Thr-67, Thr-68, 129 to 131 (EDF), Arg-172, Tyr-182, and Arg-219. Residue Thr-67 coordinates Mg(2+). The segment at 183 to 253 (TEDELDLIVA…IADRALTRLG (71 aa)) is small ATPAse domain (RuvB-S). The head domain (RuvB-H) stretch occupies residues 256 to 341 (HLGLDLGDRR…KGPGQSDLFG (86 aa)). Residues Arg-292, Arg-311, and Arg-316 each contribute to the DNA site.

Belongs to the RuvB family. In terms of assembly, homohexamer. Forms an RuvA(8)-RuvB(12)-Holliday junction (HJ) complex. HJ DNA is sandwiched between 2 RuvA tetramers; dsDNA enters through RuvA and exits via RuvB. An RuvB hexamer assembles on each DNA strand where it exits the tetramer. Each RuvB hexamer is contacted by two RuvA subunits (via domain III) on 2 adjacent RuvB subunits; this complex drives branch migration. In the full resolvosome a probable DNA-RuvA(4)-RuvB(12)-RuvC(2) complex forms which resolves the HJ.

Its subcellular location is the cytoplasm. The enzyme catalyses ATP + H2O = ADP + phosphate + H(+). The RuvA-RuvB-RuvC complex processes Holliday junction (HJ) DNA during genetic recombination and DNA repair, while the RuvA-RuvB complex plays an important role in the rescue of blocked DNA replication forks via replication fork reversal (RFR). RuvA specifically binds to HJ cruciform DNA, conferring on it an open structure. The RuvB hexamer acts as an ATP-dependent pump, pulling dsDNA into and through the RuvAB complex. RuvB forms 2 homohexamers on either side of HJ DNA bound by 1 or 2 RuvA tetramers; 4 subunits per hexamer contact DNA at a time. Coordinated motions by a converter formed by DNA-disengaged RuvB subunits stimulates ATP hydrolysis and nucleotide exchange. Immobilization of the converter enables RuvB to convert the ATP-contained energy into a lever motion, pulling 2 nucleotides of DNA out of the RuvA tetramer per ATP hydrolyzed, thus driving DNA branch migration. The RuvB motors rotate together with the DNA substrate, which together with the progressing nucleotide cycle form the mechanistic basis for DNA recombination by continuous HJ branch migration. Branch migration allows RuvC to scan DNA until it finds its consensus sequence, where it cleaves and resolves cruciform DNA. The polypeptide is Holliday junction branch migration complex subunit RuvB (Cereibacter sphaeroides (strain ATCC 17029 / ATH 2.4.9) (Rhodobacter sphaeroides)).